A 262-amino-acid polypeptide reads, in one-letter code: uncharacterized protein (262 aa).

A run of 6 helical transmembrane segments spans residues 7–27, 58–78, 114–134, 140–160, 179–199, and 216–236; these read LAVA…LAHM, DTLG…IVFG, FLAF…VLGG, GGFQ…IAFG, GALG…YYLF, and IITA…VLAG.

Its subcellular location is the cell membrane. This is an uncharacterized protein from Methanocaldococcus jannaschii (strain ATCC 43067 / DSM 2661 / JAL-1 / JCM 10045 / NBRC 100440) (Methanococcus jannaschii).